The chain runs to 120 residues: Glycine cleavage system H protein (120 aa).

A Lipoyl-binding domain is found at Val-17 to Lys-99. Lys-58 is modified (N6-lipoyllysine).

This sequence belongs to the GcvH family. In terms of assembly, the glycine cleavage system is composed of four proteins: P, T, L and H. (R)-lipoate is required as a cofactor.

In terms of biological role, the glycine cleavage system catalyzes the degradation of glycine. The H protein shuttles the methylamine group of glycine from the P protein to the T protein. In Rhizobium etli (strain ATCC 51251 / DSM 11541 / JCM 21823 / NBRC 15573 / CFN 42), this protein is Glycine cleavage system H protein.